Consider the following 46-residue polypeptide: Late transcription unit A protein (46 aa).

The chain is Late transcription unit A protein (ltuA) from Chlamydia muridarum (strain MoPn / Nigg).